We begin with the raw amino-acid sequence, 98 residues long: Aspartyl/glutamyl-tRNA(Asn/Gln) amidotransferase subunit C (98 aa).

Belongs to the GatC family. Heterotrimer of A, B and C subunits.

It catalyses the reaction L-glutamyl-tRNA(Gln) + L-glutamine + ATP + H2O = L-glutaminyl-tRNA(Gln) + L-glutamate + ADP + phosphate + H(+). The enzyme catalyses L-aspartyl-tRNA(Asn) + L-glutamine + ATP + H2O = L-asparaginyl-tRNA(Asn) + L-glutamate + ADP + phosphate + 2 H(+). Allows the formation of correctly charged Asn-tRNA(Asn) or Gln-tRNA(Gln) through the transamidation of misacylated Asp-tRNA(Asn) or Glu-tRNA(Gln) in organisms which lack either or both of asparaginyl-tRNA or glutaminyl-tRNA synthetases. The reaction takes place in the presence of glutamine and ATP through an activated phospho-Asp-tRNA(Asn) or phospho-Glu-tRNA(Gln). This chain is Aspartyl/glutamyl-tRNA(Asn/Gln) amidotransferase subunit C, found in Beutenbergia cavernae (strain ATCC BAA-8 / DSM 12333 / CCUG 43141 / JCM 11478 / NBRC 16432 / NCIMB 13614 / HKI 0122).